The chain runs to 508 residues: UDP-N-acetylmuramoylalanine--D-glutamate ligase (508 aa).

Position 138 to 144 (138 to 144) interacts with ATP; sequence GTNGKTT.

It belongs to the MurCDEF family.

It localises to the cytoplasm. It catalyses the reaction UDP-N-acetyl-alpha-D-muramoyl-L-alanine + D-glutamate + ATP = UDP-N-acetyl-alpha-D-muramoyl-L-alanyl-D-glutamate + ADP + phosphate + H(+). The protein operates within cell wall biogenesis; peptidoglycan biosynthesis. Functionally, cell wall formation. Catalyzes the addition of glutamate to the nucleotide precursor UDP-N-acetylmuramoyl-L-alanine (UMA). In Bordetella avium (strain 197N), this protein is UDP-N-acetylmuramoylalanine--D-glutamate ligase.